Reading from the N-terminus, the 306-residue chain is Porphobilinogen deaminase (306 aa).

An S-(dipyrrolylmethanemethyl)cysteine modification is found at C241.

It belongs to the HMBS family. As to quaternary structure, monomer. The cofactor is dipyrromethane.

It carries out the reaction 4 porphobilinogen + H2O = hydroxymethylbilane + 4 NH4(+). The protein operates within porphyrin-containing compound metabolism; protoporphyrin-IX biosynthesis; coproporphyrinogen-III from 5-aminolevulinate: step 2/4. Tetrapolymerization of the monopyrrole PBG into the hydroxymethylbilane pre-uroporphyrinogen in several discrete steps. The sequence is that of Porphobilinogen deaminase from Acidithiobacillus ferrooxidans (strain ATCC 23270 / DSM 14882 / CIP 104768 / NCIMB 8455) (Ferrobacillus ferrooxidans (strain ATCC 23270)).